Here is a 213-residue protein sequence, read N- to C-terminus: Protein Tpen_0748 (213 aa).

One can recognise an AMMECR1 domain in the interval 7–207; that stretch reads EEGALLVRLA…ETTPKGDVVE (201 aa).

The protein is Protein Tpen_0748 of Thermofilum pendens (strain DSM 2475 / Hrk 5).